A 236-amino-acid polypeptide reads, in one-letter code: Probable sulfate/thiosulfate import ATP-binding protein CysA (236 aa).

Residues I3–L233 form the ABC transporter domain. G35–S42 contacts ATP.

This sequence belongs to the ABC transporter superfamily. Sulfate/tungstate importer (TC 3.A.1.6) family.

The protein resides in the plastid. It is found in the chloroplast. The enzyme catalyses sulfate(out) + ATP + H2O = sulfate(in) + ADP + phosphate + H(+). It carries out the reaction thiosulfate(out) + ATP + H2O = thiosulfate(in) + ADP + phosphate + H(+). Part of the ABC transporter complex involved in sulfate/thiosulfate import. Responsible for energy coupling to the transport system. The chain is Probable sulfate/thiosulfate import ATP-binding protein CysA from Chlorella vulgaris (Green alga).